The following is an 875-amino-acid chain: Lysine-specific demethylase JMJ26 (875 aa).

The tract at residues 31-103 is disordered; it reads KPVEATSLSS…RSSVKKRATT (73 aa). The short motif at 62 to 69 is the Nuclear localization signal element; the sequence is RKRSKADE. The span at 79 to 93 shows a compositional bias: basic and acidic residues; sequence KCDDENKCEENEKKQ. Zn(2+)-binding residues include C193, C196, C207, C210, C216, C219, C236, C239, C322, C325, C339, and C347. An RING-type; degenerate zinc finger spans residues 193 to 240; the sequence is CHQCSKGERRYLFICTFCEVRLYCFPCIKKWYPHLSTDDILEKCPFCR. The B box-type; degenerate zinc-finger motif lies at 317 to 347; that stretch reads EERVFCNHCATSIVDLHRSCPKCSYELCLNC. A JmjC domain is found at 614 to 837; that stretch reads PRSGILNIAT…ECLRLTDEFR (224 aa). H658, D660, and H805 together coordinate Fe cation.

Belongs to the JARID1 histone demethylase family. Fe(2+) is required as a cofactor. As to expression, expressed in inflorescences, roots, siliques, leaves and stems.

Its subcellular location is the nucleus. In terms of biological role, may function as histone H3 lysine demethylase and be involved in regulation of gene expression. In Arabidopsis thaliana (Mouse-ear cress), this protein is Lysine-specific demethylase JMJ26.